A 102-amino-acid polypeptide reads, in one-letter code: Small ribosomal subunit protein uS10 (102 aa).

Belongs to the universal ribosomal protein uS10 family. Part of the 30S ribosomal subunit.

Functionally, involved in the binding of tRNA to the ribosomes. The chain is Small ribosomal subunit protein uS10 from Streptococcus suis (strain 98HAH33).